The chain runs to 266 residues: Syntaxin-71 (266 aa).

The Cytoplasmic portion of the chain corresponds to 1 to 243 (MTVIDILTRV…TVNQLRSSRN (243 aa)). S12 carries the phosphoserine modification. Residues 44-87 (ETQIETALEKAELVTKEKNRAAAVAMNAEIRRTKARLSEEVPKL) adopt a coiled-coil conformation. Residues 122–146 (DGTAGGPKSTSAWTPSSTTSRPDIK) are disordered. Residues 130-141 (STSAWTPSSTTS) show a composition bias toward low complexity. One can recognise a t-SNARE coiled-coil homology domain in the interval 172–234 (EMRKIKQEQG…KNTNVRLKDT (63 aa)). The helical; Anchor for type IV membrane protein transmembrane segment at 244-264 (FCIDIVLLCIVLGIAAYLYNV) threads the bilayer. At 265–266 (LK) the chain is on the vesicular side.

The protein belongs to the syntaxin family. In terms of assembly, part of the t-SNARE complex. Expressed in root, leaf, stem, flower and silique.

It localises to the membrane. Its function is as follows. Vesicle trafficking protein that functions in the secretory pathway. This chain is Syntaxin-71 (SYP71), found in Arabidopsis thaliana (Mouse-ear cress).